Here is a 93-residue protein sequence, read N- to C-terminus: Molybdopterin synthase sulfur carrier subunit (93 aa).

Gly-93 is subject to 1-thioglycine; alternate. Glycyl adenylate; alternate is present on Gly-93.

It belongs to the MoaD family. MOCS2A subfamily. Heterotetramer; composed of 2 small (MOCS2A) and 2 large (MOCS2B) subunits. C-terminal thiocarboxylation occurs in 2 steps, it is first acyl-adenylated (-COAMP) via the hesA/moeB/thiF part of UBA4, then thiocarboxylated (-COSH) via the rhodanese domain of UBA4.

The protein localises to the cytoplasm. It participates in cofactor biosynthesis; molybdopterin biosynthesis. Functionally, acts as a sulfur carrier required for molybdopterin biosynthesis. Component of the molybdopterin synthase complex that catalyzes the conversion of precursor Z into molybdopterin by mediating the incorporation of 2 sulfur atoms into precursor Z to generate a dithiolene group. In the complex, serves as sulfur donor by being thiocarboxylated (-COSH) at its C-terminus by UBA4. After interaction with MOCS2B, the sulfur is then transferred to precursor Z to form molybdopterin. The protein is Molybdopterin synthase sulfur carrier subunit of Mycosarcoma maydis (Corn smut fungus).